A 235-amino-acid chain; its full sequence is MVDPVEARDRLIVALDLPDVRAAEAMIARLDDSVTFYKIGYQLAYAGGLPLARALKAAGKKVFVDLKLHDIGNTVARGVESLASLGATFITVHAYPQTMKAAVEGRGASKVKILAVTVLTSYDEADLAQAGYRLGVRDLVELRARQAKELGIDGLVCSPEEAAHLRGIVGDGIKLVTPGIRPAGSAAGDQKRIMTPARAIAAGADYLVVGRPVTEAADPKAAADAIVDEIVGATT.

Residues aspartate 16, lysine 38, 65 to 74, threonine 120, arginine 181, glutamine 190, glycine 210, and arginine 211 each bind substrate; that span reads DLKLHDIGNT. The active-site Proton donor is the lysine 67.

The protein belongs to the OMP decarboxylase family. Type 1 subfamily. In terms of assembly, homodimer.

It catalyses the reaction orotidine 5'-phosphate + H(+) = UMP + CO2. It participates in pyrimidine metabolism; UMP biosynthesis via de novo pathway; UMP from orotate: step 2/2. Catalyzes the decarboxylation of orotidine 5'-monophosphate (OMP) to uridine 5'-monophosphate (UMP). This is Orotidine 5'-phosphate decarboxylase from Rhodopseudomonas palustris (strain BisA53).